The following is a 378-amino-acid chain: Carbamoyl phosphate synthase small chain (378 aa).

Residues 1-188 are CPSase; sequence MSILKEAYLY…THFAYGTSPN (188 aa). Positions 49, 244, and 246 each coordinate L-glutamine. Residues 192–378 form the Glutamine amidotransferase type-1 domain; sequence KVVAIDFGAK…FEEFAKLCCK (187 aa). Catalysis depends on cysteine 272, which acts as the Nucleophile. L-glutamine is bound by residues leucine 273, glutamine 276, asparagine 314, and tyrosine 317. Catalysis depends on residues histidine 355 and glutamate 357.

Belongs to the CarA family. As to quaternary structure, composed of two chains; the small (or glutamine) chain promotes the hydrolysis of glutamine to ammonia, which is used by the large (or ammonia) chain to synthesize carbamoyl phosphate. Tetramer of heterodimers (alpha,beta)4.

It catalyses the reaction hydrogencarbonate + L-glutamine + 2 ATP + H2O = carbamoyl phosphate + L-glutamate + 2 ADP + phosphate + 2 H(+). The enzyme catalyses L-glutamine + H2O = L-glutamate + NH4(+). It functions in the pathway amino-acid biosynthesis; L-arginine biosynthesis; carbamoyl phosphate from bicarbonate: step 1/1. It participates in pyrimidine metabolism; UMP biosynthesis via de novo pathway; (S)-dihydroorotate from bicarbonate: step 1/3. Its function is as follows. Small subunit of the glutamine-dependent carbamoyl phosphate synthetase (CPSase). CPSase catalyzes the formation of carbamoyl phosphate from the ammonia moiety of glutamine, carbonate, and phosphate donated by ATP, constituting the first step of 2 biosynthetic pathways, one leading to arginine and/or urea and the other to pyrimidine nucleotides. The small subunit (glutamine amidotransferase) binds and cleaves glutamine to supply the large subunit with the substrate ammonia. This Helicobacter hepaticus (strain ATCC 51449 / 3B1) protein is Carbamoyl phosphate synthase small chain.